Reading from the N-terminus, the 180-residue chain is NAD(P)H-quinone oxidoreductase subunit I, chloroplastic (180 aa).

4Fe-4S ferredoxin-type domains lie at 55-84 (GRIH…VDWR) and 95-124 (LNYS…MTEE). [4Fe-4S] cluster is bound by residues Cys-64, Cys-67, Cys-70, Cys-74, Cys-104, Cys-107, Cys-110, and Cys-114.

It belongs to the complex I 23 kDa subunit family. In terms of assembly, NDH is composed of at least 16 different subunits, 5 of which are encoded in the nucleus. It depends on [4Fe-4S] cluster as a cofactor.

Its subcellular location is the plastid. It is found in the chloroplast thylakoid membrane. It catalyses the reaction a plastoquinone + NADH + (n+1) H(+)(in) = a plastoquinol + NAD(+) + n H(+)(out). The enzyme catalyses a plastoquinone + NADPH + (n+1) H(+)(in) = a plastoquinol + NADP(+) + n H(+)(out). Functionally, NDH shuttles electrons from NAD(P)H:plastoquinone, via FMN and iron-sulfur (Fe-S) centers, to quinones in the photosynthetic chain and possibly in a chloroplast respiratory chain. The immediate electron acceptor for the enzyme in this species is believed to be plastoquinone. Couples the redox reaction to proton translocation, and thus conserves the redox energy in a proton gradient. This Chloranthus spicatus (Chulantree) protein is NAD(P)H-quinone oxidoreductase subunit I, chloroplastic.